The following is a 353-amino-acid chain: UPF0283 membrane protein YcjF (353 aa).

3 helical membrane-spanning segments follow: residues 70 to 90, 100 to 120, and 213 to 233; these read MVMG…IQWT, VALG…GSVV, and ESTL…FIAW.

It belongs to the UPF0283 family.

It is found in the cell inner membrane. This is UPF0283 membrane protein YcjF from Shigella flexneri serotype 5b (strain 8401).